The following is a 436-amino-acid chain: Hydrogenobyrinate a,c-diamide synthase (436 aa).

In terms of domain architecture, GATase cobBQ-type spans 244-435; that stretch reads RIAVARDDAF…MHVIDFSGEA (192 aa). Catalysis depends on Cys-327, which acts as the Nucleophile.

The protein belongs to the CobB/CbiA family. Mg(2+) is required as a cofactor.

It catalyses the reaction hydrogenobyrinate + 2 L-glutamine + 2 ATP + 2 H2O = hydrogenobyrinate a,c-diamide + 2 L-glutamate + 2 ADP + 2 phosphate + 2 H(+). Its pathway is cofactor biosynthesis; adenosylcobalamin biosynthesis; cob(II)yrinate a,c-diamide from precorrin-2 (aerobic route): step 9/10. Its function is as follows. Catalyzes the ATP-dependent amidation of the two carboxylate groups at positions a and c of hydrogenobyrinate, using either L-glutamine or ammonia as the nitrogen source. The polypeptide is Hydrogenobyrinate a,c-diamide synthase (Brucella abortus biovar 1 (strain 9-941)).